The following is a 396-amino-acid chain: NDP-glycosyltransferase YjiC (396 aa).

UDP is bound by residues asparagine 18, threonine 234, valine 283, histidine 298, and 302–306 (NSTME).

This sequence belongs to the UDP-glycosyltransferase family.

The catalysed reaction is an NDP-glycose + an acceptor = a glycosylated acceptor + NDP.. In terms of biological role, glycosyltransferase that can glycosylate a wide range of substrates, including various flavonoids (flavones, flavonols, flavanones, flavanols, chalcones), isoflavonoids and stilbenes, to produce multiple glycosylated products. It can accept diverse nucleotide diphosphate-D/L-sugars as donors, including ADP-, GDP-, CDP-, TDP- or UDP-alpha-D-glucose, and catalyzes O-, N-, or S-glycosylation. In vitro, catalyzes the glycosylation of, among others, apigenin, 3-hydroxyflavone, phloretin or resveratrol, resulting in multiple glucosylated products, along with mono-, di-, tri- and tetraglucosides. Can also catalyze the glycosylation of the macrolide epothilone A with diverse NDP-D/L-sugars, forming different epothilone A glycoside derivatives. The chain is NDP-glycosyltransferase YjiC from Bacillus licheniformis (strain ATCC 14580 / DSM 13 / JCM 2505 / CCUG 7422 / NBRC 12200 / NCIMB 9375 / NCTC 10341 / NRRL NRS-1264 / Gibson 46).